An 801-amino-acid chain; its full sequence is Na(+)/H(+) antiporter subunit A1 (801 aa).

A run of 21 helical transmembrane segments spans residues 4 to 25 (LHIA…YRFF), 30 to 49 (LGWF…LTLI), 79 to 101 (LGLL…SIGY), 108 to 127 (LGNF…GVVL), 131 to 153 (VIIL…SFWR), 166 to 188 (LIIT…IPTQ), 208 to 230 (FIFA…PFYI), 243 to 265 (SAYL…MTPI), 270 to 289 (QGWI…WASL), 302 to 324 (AFST…ISYH), 339 to 361 (AAIF…TGAV), 373 to 395 (LGGL…LSMA), 429 to 451 (YLFP…KFIM), 472 to 494 (ILML…FPGI), 526 to 548 (AFLS…SYWV), 589 to 611 (NNLV…SVPF), 621 to 641 (IRIF…LILF), 646 to 668 (LFSI…FFKA), 672 to 694 (ALTQ…YHLP), 707 to 729 (LTNA…IAYG), and 767 to 784 (LFES…YTMI).

This sequence belongs to the CPA3 antiporters (TC 2.A.63) subunit A family. As to quaternary structure, may form a heterooligomeric complex that consists of seven subunits: mnhA1, mnhB1, mnhC1, mnhD1, mnhE1, mnhF1 and mnhG1.

The protein localises to the cell membrane. Its activity is regulated as follows. Na(+) extrusion is completely inhibited by the H(+) conductor carbonyl cyanide m-chlorophenylhydrazone (CCCP). Its function is as follows. Mnh complex is a Na(+)/H(+) antiporter involved in Na(+) excretion. This chain is Na(+)/H(+) antiporter subunit A1 (mnhA1), found in Staphylococcus aureus (strain MRSA252).